A 218-amino-acid chain; its full sequence is 4-coumaroyl-homoserine lactone synthase (218 aa).

This sequence belongs to the autoinducer synthase family.

It carries out the reaction 4-coumaroyl-CoA + S-adenosyl-L-methionine = N-(4-coumaroyl)-L-homoserine lactone + S-methyl-5'-thioadenosine + CoA + H(+). Functionally, catalyzes the synthesis of 4-coumaroyl-homoserine lactone, a quorum-sensing (QS) autoinducer molecule which binds to RpaR transcriptional regulator to regulate expression of QS-dependent genes. The chain is 4-coumaroyl-homoserine lactone synthase from Rhodopseudomonas palustris (strain ATCC BAA-98 / CGA009).